A 169-amino-acid polypeptide reads, in one-letter code: Thaumatin-like pathogenesis-related protein 4 (169 aa).

Residues M1–A21 form the signal peptide.

The protein belongs to the thaumatin family.

Its function is as follows. Associated with resistance against stem rust fungi. This Avena sativa (Oat) protein is Thaumatin-like pathogenesis-related protein 4 (RASTL-4).